The primary structure comprises 569 residues: Oxygen-dependent choline dehydrogenase (569 aa).

Position 9 to 38 (9 to 38 (DYVIIGGGSAGSVLGNRLSEDKDKEVLVLE)) interacts with FAD. Histidine 475 acts as the Proton acceptor in catalysis.

The protein belongs to the GMC oxidoreductase family. The cofactor is FAD.

It carries out the reaction choline + A = betaine aldehyde + AH2. The catalysed reaction is betaine aldehyde + NAD(+) + H2O = glycine betaine + NADH + 2 H(+). It participates in amine and polyamine biosynthesis; betaine biosynthesis via choline pathway; betaine aldehyde from choline (cytochrome c reductase route): step 1/1. Functionally, involved in the biosynthesis of the osmoprotectant glycine betaine. Catalyzes the oxidation of choline to betaine aldehyde and betaine aldehyde to glycine betaine at the same rate. The protein is Oxygen-dependent choline dehydrogenase of Staphylococcus aureus (strain COL).